A 237-amino-acid chain; its full sequence is Endonuclease NucS (237 aa).

Belongs to the NucS endonuclease family.

Its subcellular location is the cytoplasm. Its function is as follows. Cleaves both 3' and 5' ssDNA extremities of branched DNA structures. The sequence is that of Endonuclease NucS from Saccharolobus islandicus (strain L.S.2.15 / Lassen #1) (Sulfolobus islandicus).